We begin with the raw amino-acid sequence, 342 residues long: Isopentenyl-diphosphate delta-isomerase (342 aa).

11–12 (RK) lines the substrate pocket. FMN contacts are provided by residues Ser-68, 69-71 (SMT), Ser-99, and Asn-128. 99–101 (SQR) contributes to the substrate binding site. Residue Gln-162 participates in substrate binding. Glu-163 contributes to the Mg(2+) binding site. FMN-binding positions include Lys-194, Ser-219, Thr-224, 275-277 (GVR), and 296-297 (AK).

It belongs to the IPP isomerase type 2 family. Homooctamer. Dimer of tetramers. It depends on FMN as a cofactor. NADPH is required as a cofactor. The cofactor is Mg(2+).

It localises to the cytoplasm. The catalysed reaction is isopentenyl diphosphate = dimethylallyl diphosphate. Functionally, involved in the biosynthesis of isoprenoids. Catalyzes the 1,3-allylic rearrangement of the homoallylic substrate isopentenyl (IPP) to its allylic isomer, dimethylallyl diphosphate (DMAPP). The sequence is that of Isopentenyl-diphosphate delta-isomerase from Legionella pneumophila (strain Lens).